Consider the following 269-residue polypeptide: Mitochondrial S-adenosylmethionine carrier protein (269 aa).

3 Solcar repeats span residues 4-77 (REFC…AKQL), 85-167 (LSPI…LKDL), and 176-264 (VDSW…VRTL). 6 helical membrane passes run 5–25 (EFCA…LILF), 49–69 (IYAG…AFFV), 84–104 (YLSP…ACLI), 141–161 (RGYK…FPLW), 181–201 (SAVC…PLDV), and 237–257 (FAGV…FLGA).

The protein belongs to the mitochondrial carrier (TC 2.A.29) family.

It localises to the mitochondrion inner membrane. The catalysed reaction is S-adenosyl-L-homocysteine(out) + S-adenosyl-L-methionine(in) = S-adenosyl-L-homocysteine(in) + S-adenosyl-L-methionine(out). Mitochondrial S-adenosyl-L-methionine/S-adenosyl-L-homocysteine antiporter. Mediates the exchange of cytosolic S-adenosyl-L-methionine, the predominant methyl-group donor for macromolecule methylation processes, for mitochondrial S-adenosylhomocysteine(SAH), a by-product of methylation reactions. This is Mitochondrial S-adenosylmethionine carrier protein (slc25a26) from Xenopus tropicalis (Western clawed frog).